Consider the following 83-residue polypeptide: RNA-binding protein Hfq (83 aa).

The Sm domain maps to 10 to 70 (DAFLNQVRKE…ISTVSPLKPV (61 aa)).

It belongs to the Hfq family. As to quaternary structure, homohexamer.

In terms of biological role, RNA chaperone that binds small regulatory RNA (sRNAs) and mRNAs to facilitate mRNA translational regulation in response to envelope stress, environmental stress and changes in metabolite concentrations. Also binds with high specificity to tRNAs. The polypeptide is RNA-binding protein Hfq (Pelotomaculum thermopropionicum (strain DSM 13744 / JCM 10971 / SI)).